Reading from the N-terminus, the 281-residue chain is Leukocyte antigen CD37 (281 aa).

Residues M1–V17 lie on the Cytoplasmic side of the membrane. The helical transmembrane segment at F18–I38 threads the bilayer. The Extracellular segment spans residues D39–K59. Residues V60–L74 form a helical membrane-spanning segment. At G75–C85 the chain is on the cytoplasmic side. Residues L86–Q111 traverse the membrane as a helical segment. At R112–N241 the chain is on the extracellular side. Residues N170, N183, and N188 are each glycosylated (N-linked (GlcNAc...) asparagine). A helical transmembrane segment spans residues I242–L266. Over C267 to R281 the chain is Cytoplasmic.

The protein belongs to the tetraspanin (TM4SF) family. Interacts with SCIMP. Interacts with SOCS3. Interacts with DECTIN1/CLEC7A. In terms of processing, tyrosine phosphorylated; leading to activation of downstream signaling pathways. B-lymphocytes.

The protein localises to the cell membrane. Its function is as follows. Structural component of specialized membrane microdomains known as tetraspanin-enriched microdomains (TERMs), which act as platforms for receptor clustering and signaling. Participates thereby in diverse biological functions such as cell signal transduction, adhesion, migration and protein trafficking. Upon ligand binding, two signaling pathways are activated, one acting through phosphorylation by LYN leading to cell death or a survival pathway with activation of GSK3B. Plays an essential role essential for clustering of integrin ITGA4/ITGB1 and promotes its mobility in the plasma membrane of B-cells. In turn, participates in ITGA4/ITGB1 integrin-mediated antiapoptotic signaling through AKT. Plays also a role in the migration of dendritic cells and neutrophils to draining lymph nodes, as well as in their integrin-mediated adhesion. Negatively regulates IL-6 responses through direct interaction with SOCS3 thereby preventing constitutive IL-6 signaling. Alternatively, inhibition of IL-6 signaling can also occur via interaction and stabilization of DECTIN1/CLEC7A at the cell membrane to inhibit its ability to promote the production of IL-6. This Rattus norvegicus (Rat) protein is Leukocyte antigen CD37 (Cd37).